A 433-amino-acid chain; its full sequence is Probable phosphoglucosamine mutase (433 aa).

Ser91 (phosphoserine intermediate) is an active-site residue. Positions 91, 229, 231, and 233 each coordinate Mg(2+). A Phosphoserine modification is found at Ser91.

This sequence belongs to the phosphohexose mutase family. The cofactor is Mg(2+). Activated by phosphorylation.

It carries out the reaction alpha-D-glucosamine 1-phosphate = D-glucosamine 6-phosphate. Functionally, catalyzes the conversion of glucosamine-6-phosphate to glucosamine-1-phosphate. The polypeptide is Probable phosphoglucosamine mutase (Methanococcoides burtonii (strain DSM 6242 / NBRC 107633 / OCM 468 / ACE-M)).